We begin with the raw amino-acid sequence, 401 residues long: Beta-ketoadipyl-CoA thiolase (401 aa).

Catalysis depends on C91, which acts as the Acyl-thioester intermediate. Catalysis depends on proton acceptor residues H357 and C387.

This sequence belongs to the thiolase-like superfamily. Thiolase family.

The catalysed reaction is succinyl-CoA + acetyl-CoA = 3-oxoadipyl-CoA + CoA. It functions in the pathway aromatic compound metabolism; beta-ketoadipate pathway; acetyl-CoA and succinyl-CoA from 3-oxoadipate: step 2/2. Functionally, catalyzes thiolytic cleavage of beta-ketoadipyl-CoA to succinyl-CoA and acetyl-CoA. This is Beta-ketoadipyl-CoA thiolase (pcaF) from Pseudomonas aeruginosa (strain ATCC 15692 / DSM 22644 / CIP 104116 / JCM 14847 / LMG 12228 / 1C / PRS 101 / PAO1).